A 120-amino-acid chain; its full sequence is NAD(P)H-quinone oxidoreductase subunit 3, chloroplastic (120 aa).

The next 3 helical transmembrane spans lie at 9 to 29 (IFWA…LISG), 64 to 84 (MFAL…PWAM), and 88 to 108 (VLGV…IVGS).

Belongs to the complex I subunit 3 family. In terms of assembly, NDH is composed of at least 16 different subunits, 5 of which are encoded in the nucleus.

It is found in the plastid. The protein localises to the chloroplast thylakoid membrane. It catalyses the reaction a plastoquinone + NADH + (n+1) H(+)(in) = a plastoquinol + NAD(+) + n H(+)(out). The catalysed reaction is a plastoquinone + NADPH + (n+1) H(+)(in) = a plastoquinol + NADP(+) + n H(+)(out). NDH shuttles electrons from NAD(P)H:plastoquinone, via FMN and iron-sulfur (Fe-S) centers, to quinones in the photosynthetic chain and possibly in a chloroplast respiratory chain. The immediate electron acceptor for the enzyme in this species is believed to be plastoquinone. Couples the redox reaction to proton translocation, and thus conserves the redox energy in a proton gradient. This Acorus calamus var. americanus (American sweet flag) protein is NAD(P)H-quinone oxidoreductase subunit 3, chloroplastic.